The primary structure comprises 203 residues: tRNA (cytidine(56)-2'-O)-methyltransferase (203 aa).

S-adenosyl-L-methionine is bound by residues L80, 109-113 (GAEKV), and 127-134 (IGNQPHSE). The interval 178–203 (AEQDKAEGKATPGKNWENSGFTGDNP) is disordered. The segment covering 193-203 (WENSGFTGDNP) has biased composition (polar residues).

The protein belongs to the aTrm56 family. In terms of assembly, homodimer.

The protein localises to the cytoplasm. The catalysed reaction is cytidine(56) in tRNA + S-adenosyl-L-methionine = 2'-O-methylcytidine(56) in tRNA + S-adenosyl-L-homocysteine + H(+). Its function is as follows. Specifically catalyzes the AdoMet-dependent 2'-O-ribose methylation of cytidine at position 56 in tRNAs. The chain is tRNA (cytidine(56)-2'-O)-methyltransferase from Pyrococcus horikoshii (strain ATCC 700860 / DSM 12428 / JCM 9974 / NBRC 100139 / OT-3).